The sequence spans 828 residues: Periplasmic nitrate reductase (828 aa).

The tat-type signal signal peptide spans Met-1 to Ala-31. The 4Fe-4S Mo/W bis-MGD-type domain maps to Ile-39–Asp-95. [4Fe-4S] cluster is bound by residues Cys-46, Cys-49, Cys-53, and Cys-81. Residues Lys-83, Gln-150, Asn-175, Cys-179, Trp-212–Met-219, Ser-243–His-247, Gln-262–Asp-264, Met-372, Gln-376, Asn-482, Ser-508–Asp-509, Lys-531, Asp-558, and Thr-718–Thr-727 contribute to the Mo-bis(molybdopterin guanine dinucleotide) site. Phe-794 contributes to the substrate binding site. Asn-802 and Lys-819 together coordinate Mo-bis(molybdopterin guanine dinucleotide).

Belongs to the prokaryotic molybdopterin-containing oxidoreductase family. NasA/NapA/NarB subfamily. Component of the periplasmic nitrate reductase NapAB complex composed of NapA and NapB. Requires [4Fe-4S] cluster as cofactor. The cofactor is Mo-bis(molybdopterin guanine dinucleotide). In terms of processing, predicted to be exported by the Tat system. The position of the signal peptide cleavage has not been experimentally proven.

Its subcellular location is the periplasm. It catalyses the reaction 2 Fe(II)-[cytochrome] + nitrate + 2 H(+) = 2 Fe(III)-[cytochrome] + nitrite + H2O. Catalytic subunit of the periplasmic nitrate reductase complex NapAB. Receives electrons from NapB and catalyzes the reduction of nitrate to nitrite. In Citrobacter koseri (strain ATCC BAA-895 / CDC 4225-83 / SGSC4696), this protein is Periplasmic nitrate reductase.